Reading from the N-terminus, the 813-residue chain is UPF0508 protein KLLA0A06237g (813 aa).

The disordered stretch occupies residues 478 to 537; the sequence is KKDKSKSQKNSTDSLAKLSDTKSIHPPESAMSSHASTPSSTSKSSKSSKSSSTLSPSTCK. Over residues 506–537 the composition is skewed to low complexity; sequence SAMSSHASTPSSTSKSSKSSKSSSTLSPSTCK.

It belongs to the UPF0508 family.

This Kluyveromyces lactis (strain ATCC 8585 / CBS 2359 / DSM 70799 / NBRC 1267 / NRRL Y-1140 / WM37) (Yeast) protein is UPF0508 protein KLLA0A06237g.